We begin with the raw amino-acid sequence, 512 residues long: Cobyric acid synthase (512 aa).

A GATase cobBQ-type domain is found at 251–451; it reads ALDIAVIRLP…IHGLFDSHHF (201 aa). The active-site Nucleophile is cysteine 332. Residue histidine 443 is part of the active site.

It belongs to the CobB/CobQ family. CobQ subfamily.

It participates in cofactor biosynthesis; adenosylcobalamin biosynthesis. Functionally, catalyzes amidations at positions B, D, E, and G on adenosylcobyrinic A,C-diamide. NH(2) groups are provided by glutamine, and one molecule of ATP is hydrogenolyzed for each amidation. The protein is Cobyric acid synthase of Yersinia enterocolitica serotype O:8 / biotype 1B (strain NCTC 13174 / 8081).